We begin with the raw amino-acid sequence, 117 residues long: UPF0342 protein Bcer98_0695 (117 aa).

The protein belongs to the UPF0342 family.

In Bacillus cytotoxicus (strain DSM 22905 / CIP 110041 / 391-98 / NVH 391-98), this protein is UPF0342 protein Bcer98_0695.